A 126-amino-acid chain; its full sequence is Mating-type protein A1 (126 aa).

The homeobox DNA-binding region spans 70 to 126; sequence SPKGKSSISPQARAFLEQVFRRKQSLNSKEKEEVAKKCGITPLQVRVWFINKRMRSK.

It belongs to the MATA1 family. In terms of assembly, binds DNA with a high specificity as a heterodimer of A1 and ALPHA2.

It localises to the nucleus. Functionally, mating type proteins are sequence specific DNA-binding proteins that act as master switches in yeast differentiation by controlling gene expression in a cell type-specific fashion. Transcriptional corepressor that, in a/alpha diploid cells, binds cooperatively with the ALPHA2 protein to a 21-bp DNA sequence termed the haploid-specific gene (hsg) operator, to repress transcription of haploid-specific genes and of MATALPHA1. The polypeptide is Mating-type protein A1 (MATA1) (Saccharomyces cerevisiae (Baker's yeast)).